We begin with the raw amino-acid sequence, 719 residues long: Probable disease resistance protein At4g14610 (719 aa).

Residues 25 to 73 adopt a coiled-coil conformation; the sequence is SLPENLAALQKAIEVLKTKHDDVKRRVDKEEFLGRRHRLSQVQVEIERL. The 305-residue stretch at 114 to 418 folds into the NB-ARC domain; that stretch reads EENLVAQVEE…NELEKILGCP (305 aa). 156 to 163 provides a ligand contact to ATP; it reads GMGGVGKT. LRR repeat units lie at residues 400–421, 422–444, and 447–469; these read AVRR…PTCP, QLTT…FFRF, and NLVV…ISEV.

This sequence belongs to the disease resistance NB-LRR family.

In terms of biological role, probable disease resistance protein. The sequence is that of Probable disease resistance protein At4g14610 from Arabidopsis thaliana (Mouse-ear cress).